Here is a 1404-residue protein sequence, read N- to C-terminus: DNA-directed RNA polymerase subunit beta' (1404 aa).

Residues Cys-70, Cys-72, Cys-85, and Cys-88 each contribute to the Zn(2+) site. Asp-460, Asp-462, and Asp-464 together coordinate Mg(2+). 4 residues coordinate Zn(2+): Cys-814, Cys-888, Cys-895, and Cys-898.

This sequence belongs to the RNA polymerase beta' chain family. In terms of assembly, the RNAP catalytic core consists of 2 alpha, 1 beta, 1 beta' and 1 omega subunit. When a sigma factor is associated with the core the holoenzyme is formed, which can initiate transcription. It depends on Mg(2+) as a cofactor. Requires Zn(2+) as cofactor.

The enzyme catalyses RNA(n) + a ribonucleoside 5'-triphosphate = RNA(n+1) + diphosphate. In terms of biological role, DNA-dependent RNA polymerase catalyzes the transcription of DNA into RNA using the four ribonucleoside triphosphates as substrates. In Shewanella pealeana (strain ATCC 700345 / ANG-SQ1), this protein is DNA-directed RNA polymerase subunit beta'.